A 100-amino-acid polypeptide reads, in one-letter code: Large ribosomal subunit protein uL23 (100 aa).

The protein belongs to the universal ribosomal protein uL23 family. Part of the 50S ribosomal subunit. Contacts protein L29, and trigger factor when it is bound to the ribosome.

Its function is as follows. One of the early assembly proteins it binds 23S rRNA. One of the proteins that surrounds the polypeptide exit tunnel on the outside of the ribosome. Forms the main docking site for trigger factor binding to the ribosome. The polypeptide is Large ribosomal subunit protein uL23 (Buchnera aphidicola subsp. Baizongia pistaciae (strain Bp)).